The following is a 438-amino-acid chain: Aflatoxin cluster transcriptional coactivator aflS (438 aa).

Positions 65-134 (LALYNQLLAC…PSPGHVAHSV (70 aa)) constitute an HTH iclR-type domain. The segment at residues 95–114 (FEDVADIAGVPECRLRRLVR) is a DNA-binding region (H-T-H motif).

Interacts with aflR.

It is found in the nucleus. It localises to the endosome. Transcription coactivator involved in regulation of the aflatoxin biosynthesis gene cluster with aflR. The ratio of the expression data between aflS:aflR plays a crucial role in the regulation of aflatoxins production. A high ratio, produced at a range between 17 and 30 degrees Celsius, corresponds with the production profile of aflatoxin G1 biosynthesis. A low ratio, produced over 30 degrees Celsius, is related to aflatoxin B1 biosynthesis. AflJ may act in aflR transport to or from the nucleus, thus controlling the availability of aflR for transcriptional activation of aflatoxin biosynthesis cluster genes. AflJ may also assist in directing endosomes to the cytoplasmic membrane for aflatoxin export. The chain is Aflatoxin cluster transcriptional coactivator aflS from Aspergillus parasiticus (strain ATCC 56775 / NRRL 5862 / SRRC 143 / SU-1).